The following is a 425-amino-acid chain: Histidine--tRNA ligase 1 (425 aa).

This sequence belongs to the class-II aminoacyl-tRNA synthetase family. As to quaternary structure, homodimer.

Its subcellular location is the cytoplasm. It catalyses the reaction tRNA(His) + L-histidine + ATP = L-histidyl-tRNA(His) + AMP + diphosphate + H(+). This is Histidine--tRNA ligase 1 from Bacillus cereus (strain ZK / E33L).